A 101-amino-acid polypeptide reads, in one-letter code: ATP-dependent Clp protease adapter protein ClpS 1 (101 aa).

The protein belongs to the ClpS family. As to quaternary structure, binds to the N-terminal domain of the chaperone ClpA.

Involved in the modulation of the specificity of the ClpAP-mediated ATP-dependent protein degradation. The protein is ATP-dependent Clp protease adapter protein ClpS 1 of Bradyrhizobium diazoefficiens (strain JCM 10833 / BCRC 13528 / IAM 13628 / NBRC 14792 / USDA 110).